The following is a 114-amino-acid chain: Large ribosomal subunit protein bL19 (114 aa).

This sequence belongs to the bacterial ribosomal protein bL19 family.

Functionally, this protein is located at the 30S-50S ribosomal subunit interface and may play a role in the structure and function of the aminoacyl-tRNA binding site. The polypeptide is Large ribosomal subunit protein bL19 (Bacillus cytotoxicus (strain DSM 22905 / CIP 110041 / 391-98 / NVH 391-98)).